The sequence spans 143 residues: Large ribosomal subunit protein uL15 (143 aa).

The segment at 1 to 58 (MQLNDLRSAPGARREKHRPGRGIGSGLGKTGGRGHKGQTSRSGGSIAPGFEGGQQPLH) is disordered. Residues 21 to 31 (RGIGSGLGKTG) are compositionally biased toward gly residues.

Belongs to the universal ribosomal protein uL15 family. Part of the 50S ribosomal subunit.

Binds to the 23S rRNA. The chain is Large ribosomal subunit protein uL15 from Ectopseudomonas mendocina (strain ymp) (Pseudomonas mendocina).